Consider the following 558-residue polypeptide: Ribonuclease J (558 aa).

Zn(2+)-binding residues include H81, H83, D85, H86, H148, and D170. 371–375 (HVSGH) contributes to the substrate binding site. H397 contributes to the Zn(2+) binding site.

It belongs to the metallo-beta-lactamase superfamily. RNA-metabolizing metallo-beta-lactamase-like family. Bacterial RNase J subfamily. Homodimer, may be a subunit of the RNA degradosome. Zn(2+) is required as a cofactor.

Its subcellular location is the cytoplasm. An RNase that has 5'-3' exonuclease and possibly endoonuclease activity. Involved in maturation of rRNA and in some organisms also mRNA maturation and/or decay. The protein is Ribonuclease J of Mycobacterium tuberculosis (strain CDC 1551 / Oshkosh).